Reading from the N-terminus, the 139-residue chain is Tetra-peptide repeat homeobox-like protein (139 aa).

2 disordered regions span residues 1-22 and 78-139; these read MQDP…RQRQ and ERWF…QQPQ. Positions 20 to 79 form a DNA-binding region, homeobox; the sequence is QRQDRTIYNWKQQEVLENHFKEEQYPDYDTRQELAEMLNLREYQVQVWFKNRRAKRSRER. The span at 82-139 shows a compositional bias: low complexity; it reads QKQLQQLQKHPQQQHPQQQHPQQQLQQQQPQQQPQQQQPQQQPQQQQPQQQQLHQQPQ.

This sequence belongs to the paired homeobox family.

It is found in the nucleus. In terms of biological role, transcription factor required for zygotic genome activation (ZGA), a critical event in early embryonic development during which the developmental control passes from maternally provided mRNAs to the expression of the zygotic genome after fertilization. Protein produced from maternal transcripts that binds and activates expression of key ZGA marker genes, such as NANOGNB, ZSCAN4, DUXB, KLF5 and DPPA3. Binds to regulatory DNA sequences containing a 5'-TAATCC-3' sequence motif. The polypeptide is Tetra-peptide repeat homeobox-like protein (Homo sapiens (Human)).